The chain runs to 361 residues: Hydroxycarboxylate dehydrogenase B (361 aa).

NAD(+) is bound by residues H48, 122 to 124 (GRI), 178 to 182 (LLDYA), H234, N270, and 313 to 316 (GEWE).

It belongs to the LDH2/MDH2 oxidoreductase family.

It catalyses the reaction 2-hydroxyglutarate + NADP(+) = 2-oxoglutarate + NADPH + H(+). The catalysed reaction is 2-hydroxyglutarate + NAD(+) = 2-oxoglutarate + NADH + H(+). It carries out the reaction 3-phenyllactate + NADP(+) = 3-phenylpyruvate + NADPH + H(+). The enzyme catalyses 3-phenyllactate + NAD(+) = 3-phenylpyruvate + NADH + H(+). It catalyses the reaction (2R)-2-hydroxy-3-(4-hydroxyphenyl)propanoate + NAD(+) = 3-(4-hydroxyphenyl)pyruvate + NADH + H(+). The catalysed reaction is (2R)-2-hydroxy-3-(4-hydroxyphenyl)propanoate + NADP(+) = 3-(4-hydroxyphenyl)pyruvate + NADPH + H(+). It carries out the reaction (2R)-3-(3,4-dihydroxyphenyl)lactate + NADP(+) = 3-(3,4-dihydroxyphenyl)pyruvate + NADPH + H(+). The enzyme catalyses (2R)-3-(3,4-dihydroxyphenyl)lactate + NAD(+) = 3-(3,4-dihydroxyphenyl)pyruvate + NADH + H(+). Functionally, catalyzes the NAD(P)H-dependent reduction of 2-oxoglutarate, phenylpyruvate and (4-hydroxyphenyl)pyruvate, leading to the respective 2-hydroxycarboxylate in vitro. Shows a preference for NADPH over NADH as a redox partner. Do not catalyze the reverse reactions. The sequence is that of Hydroxycarboxylate dehydrogenase B from Escherichia coli O157:H7.